The sequence spans 1003 residues: Cation-transporting ATPase HMA5 (1003 aa).

A disordered region spans residues 6–25; that stretch reads LSAVAGGGRPAAAGGGGDEM. Residues 10 to 22 show a composition bias toward gly residues; the sequence is AGGGRPAAAGGGG. HMA domains lie at 51-117, 133-199, and 207-273; these read EEAH…FDAE, LSAQ…FEAA, and DKIL…NGRL. Cys62, Cys65, Cys144, and Cys147 together coordinate Cu cation. 8 helical membrane passes run 302 to 322, 331 to 351, 372 to 392, 396 to 416, 562 to 582, 599 to 619, 938 to 958, and 966 to 986; these read SLFL…IPFI, GPFH…QFVV, VLVV…LLYG, GFHP…VLFG, IFVP…FLCG, FVFS…CALG, FFAM…LFPF, and WLAG…SLLL.

This sequence belongs to the cation transport ATPase (P-type) (TC 3.A.3) family. Type IB subfamily. Expressed in root vascular cylinder, vascular bundles and mesophyll cells of leaf blades, and anther walls and microspores of stamens.

It is found in the cell membrane. In terms of biological role, metal efflux transporter that may play a role in detoxification of heavy metals, such as zinc, copper, lead and cadmium, especially in the shoots. The sequence is that of Cation-transporting ATPase HMA5 from Oryza sativa subsp. japonica (Rice).